A 214-amino-acid polypeptide reads, in one-letter code: Adenylate kinase (214 aa).

Position 10–15 (10–15 (GAGKGT)) interacts with ATP. Positions 30-59 (STGDMLRAAVKAGSELGKQAKAIMDAGKLV) are NMP. AMP-binding positions include Thr-31, Arg-36, 57-59 (KLV), 85-88 (GFPR), and Gln-92. Residues 122–159 (GRRVHPGSGRVYHVKFNPPQVEGKDDVTGEDLMTRKDD) are LID. ATP is bound by residues Arg-123 and 132–133 (VY). AMP contacts are provided by Arg-156 and Arg-167. Gln-200 lines the ATP pocket.

It belongs to the adenylate kinase family. As to quaternary structure, monomer.

It localises to the cytoplasm. It catalyses the reaction AMP + ATP = 2 ADP. The protein operates within purine metabolism; AMP biosynthesis via salvage pathway; AMP from ADP: step 1/1. Its function is as follows. Catalyzes the reversible transfer of the terminal phosphate group between ATP and AMP. Plays an important role in cellular energy homeostasis and in adenine nucleotide metabolism. The chain is Adenylate kinase from Edwardsiella ictaluri (strain 93-146).